The primary structure comprises 598 residues: UvrABC system protein C (598 aa).

Residues 14–91 (DSPGCYLHKD…IQKNMPKYNI (78 aa)) enclose the GIY-YIG domain. Positions 196–231 (DKIIEDLRSKMLAASEEMAFERAAEYRDLISGIATM) constitute a UVR domain.

Belongs to the UvrC family. In terms of assembly, interacts with UvrB in an incision complex.

Its subcellular location is the cytoplasm. Its function is as follows. The UvrABC repair system catalyzes the recognition and processing of DNA lesions. UvrC both incises the 5' and 3' sides of the lesion. The N-terminal half is responsible for the 3' incision and the C-terminal half is responsible for the 5' incision. This chain is UvrABC system protein C, found in Streptococcus pyogenes serotype M6 (strain ATCC BAA-946 / MGAS10394).